The primary structure comprises 149 residues: Calmodulin (149 aa).

An N-acetylalanine modification is found at Ala2. EF-hand domains lie at 8–43 (EQIAEFKEAFSLFDKDGDGCITTKELGTVMRSLGQN), 44–79 (PTEAELQDMISEVDADQNGTIDFPEFLNLMARKMKD), 81–116 (DSEEELKEAFKVFDKDQNGFISAAELRHVMTNLGEK), and 117–149 (LTDEEVDEMIREADIDGDGQVNYEEFVRMMLAK). Ca(2+) contacts are provided by Asp21, Asp23, Asp25, Cys27, Glu32, Asp57, Asp59, Asn61, Thr63, Glu68, Asp94, Asp96, Asn98, and Glu105. The residue at position 116 (Lys116) is an N6,N6,N6-trimethyllysine. The Ca(2+) site is built by Asp130, Asp132, Asp134, Gln136, and Glu141.

It belongs to the calmodulin family.

Calmodulin mediates the control of a large number of enzymes, ion channels and other proteins by Ca(2+). Among the enzymes to be stimulated by the calmodulin-Ca(2+) complex are a number of protein kinases and phosphatases. This is Calmodulin (CALM1) from Solanum lycopersicum (Tomato).